Consider the following 337-residue polypeptide: Large ribosomal subunit protein uL3 (337 aa).

A disordered region spans residues methionine 1 to alanine 20.

Belongs to the universal ribosomal protein uL3 family. In terms of assembly, part of the 50S ribosomal subunit. Forms a cluster with proteins L14 and L24e.

One of the primary rRNA binding proteins, it binds directly near the 3'-end of the 23S rRNA, where it nucleates assembly of the 50S subunit. In Methanosarcina acetivorans (strain ATCC 35395 / DSM 2834 / JCM 12185 / C2A), this protein is Large ribosomal subunit protein uL3.